A 381-amino-acid polypeptide reads, in one-letter code: Pentraxin-related protein PTX3 (381 aa).

Positions 1-17 are cleaved as a signal peptide; the sequence is MHLPAILLCALWSAVVA. Cystine bridges form between Cys179–Cys357 and Cys210–Cys271. The Pentraxin (PTX) domain maps to 179-381; that stretch reads CETAIFFPMR…QAHGGAQYVS (203 aa). The N-linked (GlcNAc...) asparagine glycan is linked to Asn220.

As to quaternary structure, homooctamer; disulfide-linked. Binds to C1q.

It is found in the secreted. Functionally, plays a role in the regulation of innate resistance to pathogens, inflammatory reactions, possibly clearance of self-components and female fertility. The sequence is that of Pentraxin-related protein PTX3 (Ptx3) from Mus musculus (Mouse).